Reading from the N-terminus, the 76-residue chain is Small ribosomal subunit protein bS18 (76 aa).

The protein belongs to the bacterial ribosomal protein bS18 family. In terms of assembly, part of the 30S ribosomal subunit. Forms a tight heterodimer with protein bS6.

Binds as a heterodimer with protein bS6 to the central domain of the 16S rRNA, where it helps stabilize the platform of the 30S subunit. The polypeptide is Small ribosomal subunit protein bS18 (Pseudomonas aeruginosa (strain LESB58)).